The sequence spans 454 residues: CBL-interacting protein kinase 4 (454 aa).

The 260-residue stretch at 25-284 (YELGRMLGRG…ESLAAHHPWF (260 aa)) folds into the Protein kinase domain. Residues 31 to 39 (LGRGTFAKV) and Lys-54 contribute to the ATP site. The active-site Proton acceptor is Asp-151. The tract at residues 169 to 198 (DFGLAALPDTLRDDGRLHTACGTPAYAAPE) is activation loop. Residues 311 to 335 (APPPPLNAFDIISMSPGLDLSGLFG) enclose the NAF domain. A PPI region spans residues 341–370 (LREKRFTTTASPEKTLEQLGLAGGKLGYVV).

It belongs to the protein kinase superfamily. CAMK Ser/Thr protein kinase family. SNF1 subfamily. The cofactor is Mn(2+).

The catalysed reaction is L-seryl-[protein] + ATP = O-phospho-L-seryl-[protein] + ADP + H(+). The enzyme catalyses L-threonyl-[protein] + ATP = O-phospho-L-threonyl-[protein] + ADP + H(+). CIPK serine-threonine protein kinases interact with CBL proteins. Binding of a CBL protein to the regulatory NAF domain of CIPK protein lead to the activation of the kinase in a calcium-dependent manner. This is CBL-interacting protein kinase 4 (CIPK4) from Oryza sativa subsp. japonica (Rice).